Here is a 415-residue protein sequence, read N- to C-terminus: Serine hydroxymethyltransferase (415 aa).

(6S)-5,6,7,8-tetrahydrofolate is bound by residues L122 and 126-128; that span reads GHL. K230 is modified (N6-(pyridoxal phosphate)lysine).

This sequence belongs to the SHMT family. As to quaternary structure, homodimer. Pyridoxal 5'-phosphate serves as cofactor.

Its subcellular location is the cytoplasm. The enzyme catalyses (6R)-5,10-methylene-5,6,7,8-tetrahydrofolate + glycine + H2O = (6S)-5,6,7,8-tetrahydrofolate + L-serine. It functions in the pathway one-carbon metabolism; tetrahydrofolate interconversion. It participates in amino-acid biosynthesis; glycine biosynthesis; glycine from L-serine: step 1/1. Its function is as follows. Catalyzes the reversible interconversion of serine and glycine with tetrahydrofolate (THF) serving as the one-carbon carrier. This reaction serves as the major source of one-carbon groups required for the biosynthesis of purines, thymidylate, methionine, and other important biomolecules. Also exhibits THF-independent aldolase activity toward beta-hydroxyamino acids, producing glycine and aldehydes, via a retro-aldol mechanism. In Ralstonia pickettii (strain 12J), this protein is Serine hydroxymethyltransferase.